A 426-amino-acid polypeptide reads, in one-letter code: Serine--tRNA ligase (426 aa).

L-serine is bound at residue 231–233 (TAE). Position 262–264 (262–264 (RAE)) interacts with ATP. L-serine is bound at residue Glu-285. Residue 349 to 352 (EISS) participates in ATP binding. Residue Ser-385 participates in L-serine binding.

It belongs to the class-II aminoacyl-tRNA synthetase family. Type-1 seryl-tRNA synthetase subfamily. In terms of assembly, homodimer. The tRNA molecule binds across the dimer.

It is found in the cytoplasm. The enzyme catalyses tRNA(Ser) + L-serine + ATP = L-seryl-tRNA(Ser) + AMP + diphosphate + H(+). The catalysed reaction is tRNA(Sec) + L-serine + ATP = L-seryl-tRNA(Sec) + AMP + diphosphate + H(+). Its pathway is aminoacyl-tRNA biosynthesis; selenocysteinyl-tRNA(Sec) biosynthesis; L-seryl-tRNA(Sec) from L-serine and tRNA(Sec): step 1/1. Functionally, catalyzes the attachment of serine to tRNA(Ser). Is also able to aminoacylate tRNA(Sec) with serine, to form the misacylated tRNA L-seryl-tRNA(Sec), which will be further converted into selenocysteinyl-tRNA(Sec). The sequence is that of Serine--tRNA ligase from Myxococcus xanthus (strain DK1622).